We begin with the raw amino-acid sequence, 309 residues long: Ribonuclease Z (309 aa).

The Zn(2+) site is built by His-63, His-65, Asp-67, His-68, His-145, Asp-216, and His-274. Asp-67 acts as the Proton acceptor in catalysis.

The protein belongs to the RNase Z family. In terms of assembly, homodimer. Zn(2+) is required as a cofactor.

The catalysed reaction is Endonucleolytic cleavage of RNA, removing extra 3' nucleotides from tRNA precursor, generating 3' termini of tRNAs. A 3'-hydroxy group is left at the tRNA terminus and a 5'-phosphoryl group is left at the trailer molecule.. Functionally, zinc phosphodiesterase, which displays some tRNA 3'-processing endonuclease activity. Probably involved in tRNA maturation, by removing a 3'-trailer from precursor tRNA. This Streptococcus gordonii (strain Challis / ATCC 35105 / BCRC 15272 / CH1 / DL1 / V288) protein is Ribonuclease Z.